The primary structure comprises 240 residues: tRNA (guanine-N(1)-)-methyltransferase (240 aa).

Residues Gly-110 and 129-134 (LGDFVL) contribute to the S-adenosyl-L-methionine site.

Belongs to the RNA methyltransferase TrmD family. Homodimer.

The protein localises to the cytoplasm. It catalyses the reaction guanosine(37) in tRNA + S-adenosyl-L-methionine = N(1)-methylguanosine(37) in tRNA + S-adenosyl-L-homocysteine + H(+). In terms of biological role, specifically methylates guanosine-37 in various tRNAs. The sequence is that of tRNA (guanine-N(1)-)-methyltransferase from Clostridium botulinum (strain 657 / Type Ba4).